Reading from the N-terminus, the 1201-residue chain is Coatomer subunit alpha (1201 aa).

6 WD repeats span residues 9 to 39 (SKST…QLWD), 51 to 81 (DHEG…KVWS), 93 to 123 (GHLD…RIWN), 135 to 165 (GHNH…RIWD), 207 to 237 (GHTR…KLWR), and 251 to 281 (GHTN…RVWD). The segment at 842–862 (AVNTTQEQEEPLGEENFNDED) is disordered. Over residues 848–862 (EQEEPLGEENFNDED) the composition is skewed to acidic residues.

As to quaternary structure, oligomeric complex that consists of at least the alpha, beta, beta', gamma, delta, epsilon and zeta subunits. Interacts with the ESCRT-0 subunit VPS27. Interacts with KEI1 (via C-terminal region).

The protein resides in the cytoplasm. Its subcellular location is the golgi apparatus membrane. It is found in the cytoplasmic vesicle. The protein localises to the COPI-coated vesicle membrane. Its function is as follows. The coatomer is a cytosolic protein complex that binds to dilysine motifs and reversibly associates with Golgi non-clathrin-coated vesicles, which further mediate biosynthetic protein transport from the ER, via the Golgi up to the trans Golgi network. Coatomer complex is required for budding from Golgi membranes, and is essential for the retrograde Golgi-to-ER transport of dilysine-tagged proteins. The chain is Coatomer subunit alpha (COP1) from Saccharomyces cerevisiae (strain ATCC 204508 / S288c) (Baker's yeast).